Reading from the N-terminus, the 237-residue chain is 2,3-bisphosphoglycerate-dependent phosphoglycerate mutase (237 aa).

Substrate is bound by residues 8–15 (RHGQSAWN), 21–22 (TG), Arg-60, 87–90 (ERHY), Lys-98, 114–115 (RR), and 180–181 (GN). The Tele-phosphohistidine intermediate role is filled by His-9. Residue Glu-87 is the Proton donor/acceptor of the active site.

Belongs to the phosphoglycerate mutase family. BPG-dependent PGAM subfamily. As to quaternary structure, homodimer.

The enzyme catalyses (2R)-2-phosphoglycerate = (2R)-3-phosphoglycerate. It functions in the pathway carbohydrate degradation; glycolysis; pyruvate from D-glyceraldehyde 3-phosphate: step 3/5. Its function is as follows. Catalyzes the interconversion of 2-phosphoglycerate and 3-phosphoglycerate. This Hyphomonas neptunium (strain ATCC 15444) protein is 2,3-bisphosphoglycerate-dependent phosphoglycerate mutase.